Here is a 275-residue protein sequence, read N- to C-terminus: MERKEQTMTFYSPEVIKIKGDLRYQRPTLPTNQQSVSTQKRQQYVNEACTYIRMFCGSLSGFSVLLLACTSPLNLVQFLVNNNGLELKAGLWTLCYHELCWSHTPKPPYYLQYSRALFLISILFMLISLGLLLSSCRPAERMMSAELDLKVSMLSFCSAVSLLLCLNLFLAQVELYTKNAMEYEFLWTYYLSWCSEVLYICVGIISFLNFITFQFHPPDEGVSADLWQKSRLGIGPVPKTLSATAERSRSEMQFLSGRQEKLQNVRKGKLATTRL.

Transmembrane regions (helical) follow at residues 60 to 80 (SGFSVLLLACTSPLNLVQFLV), 116 to 136 (ALFLISILFMLISLGLLLSSC), 151 to 171 (VSMLSFCSAVSLLLCLNLFLA), and 193 to 213 (WCSEVLYICVGIISFLNFITF).

It is found in the membrane. This Mus musculus (Mouse) protein is Transmembrane protein 202 (Tmem202).